We begin with the raw amino-acid sequence, 127 residues long: Small ribosomal subunit protein uS11 (127 aa).

This sequence belongs to the universal ribosomal protein uS11 family. Part of the 30S ribosomal subunit. Interacts with proteins S7 and S18. Binds to IF-3.

In terms of biological role, located on the platform of the 30S subunit, it bridges several disparate RNA helices of the 16S rRNA. Forms part of the Shine-Dalgarno cleft in the 70S ribosome. The polypeptide is Small ribosomal subunit protein uS11 (Chlorobaculum tepidum (strain ATCC 49652 / DSM 12025 / NBRC 103806 / TLS) (Chlorobium tepidum)).